Reading from the N-terminus, the 365-residue chain is Succinyl-diaminopimelate desuccinylase (365 aa).

His-64 provides a ligand contact to Zn(2+). Asp-66 is an active-site residue. Asp-95 lines the Zn(2+) pocket. Glu-125 acts as the Proton acceptor in catalysis. Zn(2+)-binding residues include Glu-126, Glu-154, and His-339.

It belongs to the peptidase M20A family. DapE subfamily. In terms of assembly, homodimer. The cofactor is Zn(2+). It depends on Co(2+) as a cofactor.

It carries out the reaction N-succinyl-(2S,6S)-2,6-diaminopimelate + H2O = (2S,6S)-2,6-diaminopimelate + succinate. The protein operates within amino-acid biosynthesis; L-lysine biosynthesis via DAP pathway; LL-2,6-diaminopimelate from (S)-tetrahydrodipicolinate (succinylase route): step 3/3. Catalyzes the hydrolysis of N-succinyl-L,L-diaminopimelic acid (SDAP), forming succinate and LL-2,6-diaminopimelate (DAP), an intermediate involved in the bacterial biosynthesis of lysine and meso-diaminopimelic acid, an essential component of bacterial cell walls. This chain is Succinyl-diaminopimelate desuccinylase, found in Campylobacter curvus (strain 525.92).